A 319-amino-acid chain; its full sequence is Lipooligosaccharide heptosyltransferase 2 (319 aa).

The protein belongs to the glycosyltransferase 9 family.

The catalysed reaction is an L-alpha-D-Hep-(1-&gt;5)-[alpha-Kdo-(2-&gt;4)]-alpha-Kdo-(2-&gt;6)-lipid A + ADP-L-glycero-beta-D-manno-heptose = an L-alpha-D-Hep-(1-&gt;3)-L-alpha-D-Hep-(1-&gt;5)-[alpha-Kdo-(2-&gt;4)]-alpha-Kdo-(2-&gt;6)-lipid A + ADP + H(+). The protein operates within bacterial outer membrane biogenesis; LOS core biosynthesis. Its function is as follows. Glycosyltransferase involved in the biosynthesis of the core oligosaccharide region of lipooligosaccharide (LOS). Catalyzes the addition of the second heptose unit to the heptosyl-Kdo2-lipid A module. This is Lipooligosaccharide heptosyltransferase 2 from Campylobacter jejuni subsp. jejuni serotype O:2 (strain ATCC 700819 / NCTC 11168).